The following is a 681-amino-acid chain: DNA ligase (681 aa).

Residues 34-38 (DEEYD), 83-84 (SL), and E112 each bind NAD(+). K114 serves as the catalytic N6-AMP-lysine intermediate. NAD(+) is bound by residues R135, E169, K285, and K309. Zn(2+) is bound by residues C403, C406, C422, and C427. Residues 584–673 (TTSNILDGLT…GVELKESWKK (90 aa)) form the BRCT domain.

It belongs to the NAD-dependent DNA ligase family. LigA subfamily. Mg(2+) is required as a cofactor. The cofactor is Mn(2+).

It catalyses the reaction NAD(+) + (deoxyribonucleotide)n-3'-hydroxyl + 5'-phospho-(deoxyribonucleotide)m = (deoxyribonucleotide)n+m + AMP + beta-nicotinamide D-nucleotide.. Its function is as follows. DNA ligase that catalyzes the formation of phosphodiester linkages between 5'-phosphoryl and 3'-hydroxyl groups in double-stranded DNA using NAD as a coenzyme and as the energy source for the reaction. It is essential for DNA replication and repair of damaged DNA. The protein is DNA ligase of Fervidobacterium nodosum (strain ATCC 35602 / DSM 5306 / Rt17-B1).